The following is a 358-amino-acid chain: DNA replication and repair protein RecF (358 aa).

Residue 30-37 coordinates ATP; that stretch reads GNNGSGKT.

Belongs to the RecF family.

It is found in the cytoplasm. In terms of biological role, the RecF protein is involved in DNA metabolism; it is required for DNA replication and normal SOS inducibility. RecF binds preferentially to single-stranded, linear DNA. It also seems to bind ATP. In Histophilus somni (strain 129Pt) (Haemophilus somnus), this protein is DNA replication and repair protein RecF.